A 341-amino-acid polypeptide reads, in one-letter code: Anthranilate phosphoribosyltransferase (341 aa).

5-phospho-alpha-D-ribose 1-diphosphate is bound by residues Gly80, 83-84, Thr88, 90-93, 108-116, and Ser120; these read GD, NIST, and KHGNYSVSS. Gly80 provides a ligand contact to anthranilate. Ser92 serves as a coordination point for Mg(2+). Asn111 provides a ligand contact to anthranilate. Arg166 lines the anthranilate pocket. The Mg(2+) site is built by Asp224 and Glu225.

This sequence belongs to the anthranilate phosphoribosyltransferase family. As to quaternary structure, homodimer. It depends on Mg(2+) as a cofactor.

It catalyses the reaction N-(5-phospho-beta-D-ribosyl)anthranilate + diphosphate = 5-phospho-alpha-D-ribose 1-diphosphate + anthranilate. It participates in amino-acid biosynthesis; L-tryptophan biosynthesis; L-tryptophan from chorismate: step 2/5. Its function is as follows. Catalyzes the transfer of the phosphoribosyl group of 5-phosphorylribose-1-pyrophosphate (PRPP) to anthranilate to yield N-(5'-phosphoribosyl)-anthranilate (PRA). This chain is Anthranilate phosphoribosyltransferase, found in Haloquadratum walsbyi (strain DSM 16790 / HBSQ001).